Here is a 450-residue protein sequence, read N- to C-terminus: MFGMSHDAYLLLDALVTIIGLIVLITRFKVHPFIALIIAAGFLGLTSGMPVEKIVKSFQDGFGGVLGFVGVILALGTMLGKLMADSGGADQIARTLIRAFGKERVHWSMMLAAFLVGIPLFFEIGFILLIPLVFIVARRSGVSLIKIGIPLLAGLSAVHGLVPPHPGPLLAIGVFGADIGKTILYGLIVALPTAAIAGPLFGALVSRYIPGTPSAELVEQIAHEPETQDLPSFGVTLATVLLPVFLMLLKTFADVAFPDGHAFRAWMDMIGHPISALLLALLVALYTFGYARGFDSKKILRLLDQSLAPTAAIVMIIGAGGGFKQMLVASGVGDVIGHLAVNAQISPILLAWLVAAVIRIATGSATVATITGAGIVVPVIDLIPGVNRELLVLATGAGSLILSHVNDAGFWLVKQYFNMSVSETFKTWTAMETILSVVGLVFILLLSLVL.

A run of 12 helical transmembrane segments spans residues 6 to 26, 30 to 50, 60 to 80, 116 to 136, 142 to 162, 183 to 203, 233 to 253, 269 to 289, 312 to 332, 338 to 358, 366 to 386, and 430 to 450; these read HDAY…VLIT, VHPF…SGMP, DGFG…TMLG, VGIP…VFIV, VSLI…HGLV, ILYG…LFGA, FGVT…KTFA, MIGH…YTFG, AIVM…ASGV, HLAV…AAVI, TVAT…IPGV, and AMET…SLVL.

It belongs to the GntP permease family.

Its subcellular location is the cell inner membrane. The protein operates within carbohydrate acid metabolism; D-gluconate degradation. This Pseudomonas aeruginosa (strain ATCC 15692 / DSM 22644 / CIP 104116 / JCM 14847 / LMG 12228 / 1C / PRS 101 / PAO1) protein is Gluconate permease (gnuT).